Reading from the N-terminus, the 570-residue chain is Proline--tRNA ligase (570 aa).

It belongs to the class-II aminoacyl-tRNA synthetase family. ProS type 1 subfamily. Homodimer.

The protein resides in the cytoplasm. The catalysed reaction is tRNA(Pro) + L-proline + ATP = L-prolyl-tRNA(Pro) + AMP + diphosphate. Its function is as follows. Catalyzes the attachment of proline to tRNA(Pro) in a two-step reaction: proline is first activated by ATP to form Pro-AMP and then transferred to the acceptor end of tRNA(Pro). As ProRS can inadvertently accommodate and process non-cognate amino acids such as alanine and cysteine, to avoid such errors it has two additional distinct editing activities against alanine. One activity is designated as 'pretransfer' editing and involves the tRNA(Pro)-independent hydrolysis of activated Ala-AMP. The other activity is designated 'posttransfer' editing and involves deacylation of mischarged Ala-tRNA(Pro). The misacylated Cys-tRNA(Pro) is not edited by ProRS. The sequence is that of Proline--tRNA ligase from Thermoanaerobacter pseudethanolicus (strain ATCC 33223 / 39E) (Clostridium thermohydrosulfuricum).